We begin with the raw amino-acid sequence, 436 residues long: UPF0761 membrane protein Bxeno_A3061 (436 aa).

6 consecutive transmembrane segments (helical) span residues 42-62 (LVPLATVAFALFTAFPIFASF), 96-116 (GLTTIGMIFLFVTAVMTMMTV), 136-156 (ILVYWAIITLGPILIGVSLSI), 180-200 (ALAGAALPLTAAAFTILYVYL), 210-230 (AVIGGVTAAIAFELAKRGFGY), and 241-261 (VYGAFAAVPLFLLWMYLCWFI).

It belongs to the UPF0761 family.

The protein resides in the cell inner membrane. The sequence is that of UPF0761 membrane protein Bxeno_A3061 from Paraburkholderia xenovorans (strain LB400).